Consider the following 141-residue polypeptide: Large ribosomal subunit protein uL11 (141 aa).

This sequence belongs to the universal ribosomal protein uL11 family. In terms of assembly, part of the ribosomal stalk of the 50S ribosomal subunit. Interacts with L10 and the large rRNA to form the base of the stalk. L10 forms an elongated spine to which L12 dimers bind in a sequential fashion forming a multimeric L10(L12)X complex. One or more lysine residues are methylated.

Functionally, forms part of the ribosomal stalk which helps the ribosome interact with GTP-bound translation factors. The polypeptide is Large ribosomal subunit protein uL11 (Clostridium kluyveri (strain ATCC 8527 / DSM 555 / NBRC 12016 / NCIMB 10680 / K1)).